We begin with the raw amino-acid sequence, 360 residues long: S-adenosylmethionine:tRNA ribosyltransferase-isomerase (360 aa).

Belongs to the QueA family. As to quaternary structure, monomer.

Its subcellular location is the cytoplasm. The enzyme catalyses 7-aminomethyl-7-carbaguanosine(34) in tRNA + S-adenosyl-L-methionine = epoxyqueuosine(34) in tRNA + adenine + L-methionine + 2 H(+). It functions in the pathway tRNA modification; tRNA-queuosine biosynthesis. Transfers and isomerizes the ribose moiety from AdoMet to the 7-aminomethyl group of 7-deazaguanine (preQ1-tRNA) to give epoxyqueuosine (oQ-tRNA). This chain is S-adenosylmethionine:tRNA ribosyltransferase-isomerase, found in Burkholderia pseudomallei (strain K96243).